We begin with the raw amino-acid sequence, 99 residues long: Cyclin-dependent protein kinase inhibitor SMR7 (99 aa).

The disordered stretch occupies residues 49-70; the sequence is ICITPTARGAKTPECPAAPRKR.

In terms of tissue distribution, expressed in root meristems after induction.

Its function is as follows. Probable cyclin-dependent protein kinase (CDK) inhibitor that functions as a repressor of mitosis in the endoreduplication cell cycle. Acts as a potent cell cycle inhibitor, regulating a hydroxyurea-dependent checkpoint in leaves. In Arabidopsis thaliana (Mouse-ear cress), this protein is Cyclin-dependent protein kinase inhibitor SMR7.